The following is a 450-amino-acid chain: Glucose-6-phosphate isomerase (450 aa).

Glutamate 290 serves as the catalytic Proton donor. Active-site residues include histidine 311 and lysine 425.

The protein belongs to the GPI family.

It is found in the cytoplasm. It catalyses the reaction alpha-D-glucose 6-phosphate = beta-D-fructose 6-phosphate. The protein operates within carbohydrate biosynthesis; gluconeogenesis. It participates in carbohydrate degradation; glycolysis; D-glyceraldehyde 3-phosphate and glycerone phosphate from D-glucose: step 2/4. Functionally, catalyzes the reversible isomerization of glucose-6-phosphate to fructose-6-phosphate. This is Glucose-6-phosphate isomerase from Listeria monocytogenes serovar 1/2a (strain ATCC BAA-679 / EGD-e).